The chain runs to 208 residues: Probable GTP-binding protein EngB (208 aa).

The EngB-type G domain occupies 23-205 (LTSEMVILGR…RQTLLKYLLT (183 aa)). GTP-binding positions include 31–38 (GRSNVGKS), 57–61 (GKTRL), 84–87 (DLPG), 154–157 (TKFD), and 182–184 (FNA). Ser38 and Thr59 together coordinate Mg(2+).

The protein belongs to the TRAFAC class TrmE-Era-EngA-EngB-Septin-like GTPase superfamily. EngB GTPase family. Mg(2+) is required as a cofactor.

In terms of biological role, necessary for normal cell division and for the maintenance of normal septation. The protein is Probable GTP-binding protein EngB of Helicobacter pylori (strain HPAG1).